A 371-amino-acid polypeptide reads, in one-letter code: MKVGFVGWRGMVGSVLMQRMKEENDFAHIPEAFFFTTSNVGGAAPDFGQAAKTLLDANDVAELAKMDIIVTCQGGDYTKSVFQPLRDSGWNGYWVDAASSLRMKDDAIIVLDPVNRNVIDNGLKNGVKNYIGGNCTVSLMLMALGGLFQNDLVEWATSMTYQAASGAGAKNMRELISGMGAIHAKVADELADPSSAILDIDRKVSDFLRSEDYPKANFGVPLAGSLIPWIDVDLGNGQSKEEWKGGVETNKILGRSDNPTVIDGLCVRIGSMRCHSQALTLKLKKDLPVSEIEAILAGANDWVKVIPNEKEASIHELTPAKVTGTLSVPVGRIRKLEMGGEYISAFTVGDQLLWGAAEPLRRVLRIVLGSL.

Residues 9–12 (RGMV), 37–38 (TS), and glutamine 73 contribute to the NADP(+) site. Residue arginine 102 participates in phosphate binding. Cysteine 135 functions as the Acyl-thioester intermediate in the catalytic mechanism. Glutamine 162 provides a ligand contact to substrate. NADP(+)-binding positions include 165–166 (SG) and proline 193. Glutamate 241 contacts substrate. Lysine 244 is a phosphate binding site. Substrate is bound at residue arginine 268. The active-site Proton acceptor is the histidine 275. Glutamine 351 lines the NADP(+) pocket.

Belongs to the aspartate-semialdehyde dehydrogenase family. Homodimer.

It carries out the reaction L-aspartate 4-semialdehyde + phosphate + NADP(+) = 4-phospho-L-aspartate + NADPH + H(+). It functions in the pathway amino-acid biosynthesis; L-lysine biosynthesis via DAP pathway; (S)-tetrahydrodipicolinate from L-aspartate: step 2/4. It participates in amino-acid biosynthesis; L-methionine biosynthesis via de novo pathway; L-homoserine from L-aspartate: step 2/3. The protein operates within amino-acid biosynthesis; L-threonine biosynthesis; L-threonine from L-aspartate: step 2/5. Its function is as follows. Catalyzes the NADPH-dependent formation of L-aspartate-semialdehyde (L-ASA) by the reductive dephosphorylation of L-aspartyl-4-phosphate. The protein is Aspartate-semialdehyde dehydrogenase of Neisseria meningitidis serogroup A / serotype 4A (strain DSM 15465 / Z2491).